The sequence spans 218 residues: Glycerol-3-phosphate acyltransferase (218 aa).

6 helical membrane-spanning segments follow: residues 3–23, 53–73, 82–102, 112–132, 142–162, and 166–186; these read FAIF…YWIA, GFPV…LSGI, FQLA…FLGF, LGVF…VFLV, IGSI…SILL, and EVSY…ILTH.

It belongs to the PlsY family. As to quaternary structure, probably interacts with PlsX.

Its subcellular location is the cell inner membrane. It catalyses the reaction an acyl phosphate + sn-glycerol 3-phosphate = a 1-acyl-sn-glycero-3-phosphate + phosphate. It participates in lipid metabolism; phospholipid metabolism. Catalyzes the transfer of an acyl group from acyl-phosphate (acyl-PO(4)) to glycerol-3-phosphate (G3P) to form lysophosphatidic acid (LPA). This enzyme utilizes acyl-phosphate as fatty acyl donor, but not acyl-CoA or acyl-ACP. This is Glycerol-3-phosphate acyltransferase from Leptospira borgpetersenii serovar Hardjo-bovis (strain JB197).